Consider the following 568-residue polypeptide: Small ribosomal subunit protein bS1 (568 aa).

6 S1 motif domains span residues 39 to 100 (KTVV…LSRE), 118 to 184 (GEFV…VSRR), 205 to 273 (GMIL…LGIK), 290 to 360 (GKKM…LSIK), 377 to 447 (GTII…LGIK), and 464 to 533 (GTIV…LSVK).

Belongs to the bacterial ribosomal protein bS1 family.

Functionally, binds mRNA; thus facilitating recognition of the initiation point. It is needed to translate mRNA with a short Shine-Dalgarno (SD) purine-rich sequence. This Rickettsia typhi (strain ATCC VR-144 / Wilmington) protein is Small ribosomal subunit protein bS1 (rpsA).